A 192-amino-acid polypeptide reads, in one-letter code: Acetyltransferase PA3944 (192 aa).

The 170-residue stretch at 18 to 187 (LLLRAWRDSD…RHILYRVDAA (170 aa)) folds into the N-acetyltransferase domain. CoA contacts are provided by residues 105-107 (WRL), Gly113, Asn145, and 150-152 (GLM).

In terms of biological role, catalyzes the transfer of an acetyl group from acetyl coenzyme A (AcCoA) to an acceptor substrate and releases both CoA and the acetylated product. It prefers the peptide Asp-Phe methyl ester (or aspartame) and the peptide antibiotics polymyxin B and colistin. Other substrates like dopamine, serotonin, puromycin, chloramphenicol, D-glucosamine, glycine and N-alpha-acetyl-L-glutamine are used and displayed lower activity. This Pseudomonas aeruginosa (strain ATCC 15692 / DSM 22644 / CIP 104116 / JCM 14847 / LMG 12228 / 1C / PRS 101 / PAO1) protein is Acetyltransferase PA3944.